Here is a 409-residue protein sequence, read N- to C-terminus: NADH-ubiquinone oxidoreductase chain 4 (409 aa).

13 helical membrane passes run 9–29, 44–64, 68–88, 90–110, 125–145, 160–180, 194–214, 221–241, 246–268, 273–295, 305–325, 352–372, and 389–409; these read LYFF…GFVA, SFSF…VLLS, FMLL…FVPS, VILM…MILG, IFYA…SFFF, VFVL…HLWL, LLAG…LGCL, VWIV…MFQS, LAAY…IIMS, GVIL…GEFY, YMSS…VVFL, FSFW…IYLL, and VGFS…SVFF.

This sequence belongs to the complex I subunit 4 family.

The protein resides in the mitochondrion membrane. It carries out the reaction a ubiquinone + NADH + 5 H(+)(in) = a ubiquinol + NAD(+) + 4 H(+)(out). Core subunit of the mitochondrial membrane respiratory chain NADH dehydrogenase (Complex I) that is believed to belong to the minimal assembly required for catalysis. Complex I functions in the transfer of electrons from NADH to the respiratory chain. The immediate electron acceptor for the enzyme is believed to be ubiquinone. This chain is NADH-ubiquinone oxidoreductase chain 4 (ND4), found in Ascaris suum (Pig roundworm).